The following is a 51-amino-acid chain: Large ribosomal subunit protein eL39 (51 aa).

It belongs to the eukaryotic ribosomal protein eL39 family.

This Methanococcoides burtonii (strain DSM 6242 / NBRC 107633 / OCM 468 / ACE-M) protein is Large ribosomal subunit protein eL39.